The following is a 284-amino-acid chain: 4-hydroxy-3-methylbut-2-enyl diphosphate reductase (284 aa).

Residue cysteine 12 coordinates [4Fe-4S] cluster. (2E)-4-hydroxy-3-methylbut-2-enyl diphosphate contacts are provided by histidine 40 and histidine 72. 2 residues coordinate dimethylallyl diphosphate: histidine 40 and histidine 72. Histidine 40 and histidine 72 together coordinate isopentenyl diphosphate. Cysteine 94 is a binding site for [4Fe-4S] cluster. Residue histidine 122 participates in (2E)-4-hydroxy-3-methylbut-2-enyl diphosphate binding. Histidine 122 is a dimethylallyl diphosphate binding site. Histidine 122 lines the isopentenyl diphosphate pocket. Glutamate 124 (proton donor) is an active-site residue. Residue threonine 161 participates in (2E)-4-hydroxy-3-methylbut-2-enyl diphosphate binding. Cysteine 193 contributes to the [4Fe-4S] cluster binding site. (2E)-4-hydroxy-3-methylbut-2-enyl diphosphate is bound by residues serine 221, asparagine 223, and serine 264. Positions 221, 223, and 264 each coordinate dimethylallyl diphosphate. Isopentenyl diphosphate-binding residues include serine 221, asparagine 223, and serine 264.

Belongs to the IspH family. [4Fe-4S] cluster serves as cofactor.

The enzyme catalyses isopentenyl diphosphate + 2 oxidized [2Fe-2S]-[ferredoxin] + H2O = (2E)-4-hydroxy-3-methylbut-2-enyl diphosphate + 2 reduced [2Fe-2S]-[ferredoxin] + 2 H(+). It catalyses the reaction dimethylallyl diphosphate + 2 oxidized [2Fe-2S]-[ferredoxin] + H2O = (2E)-4-hydroxy-3-methylbut-2-enyl diphosphate + 2 reduced [2Fe-2S]-[ferredoxin] + 2 H(+). It functions in the pathway isoprenoid biosynthesis; dimethylallyl diphosphate biosynthesis; dimethylallyl diphosphate from (2E)-4-hydroxy-3-methylbutenyl diphosphate: step 1/1. The protein operates within isoprenoid biosynthesis; isopentenyl diphosphate biosynthesis via DXP pathway; isopentenyl diphosphate from 1-deoxy-D-xylulose 5-phosphate: step 6/6. In terms of biological role, catalyzes the conversion of 1-hydroxy-2-methyl-2-(E)-butenyl 4-diphosphate (HMBPP) into a mixture of isopentenyl diphosphate (IPP) and dimethylallyl diphosphate (DMAPP). Acts in the terminal step of the DOXP/MEP pathway for isoprenoid precursor biosynthesis. The sequence is that of 4-hydroxy-3-methylbut-2-enyl diphosphate reductase from Dehalococcoides mccartyi (strain CBDB1).